A 163-amino-acid chain; its full sequence is Large ribosomal subunit protein uL15 (163 aa).

It belongs to the universal ribosomal protein uL15 family. In terms of assembly, part of the 50S ribosomal subunit.

Binds to the 23S rRNA. This chain is Large ribosomal subunit protein uL15, found in Orientia tsutsugamushi (strain Ikeda) (Rickettsia tsutsugamushi).